The primary structure comprises 149 residues: Transcriptional repressor NrdR (149 aa).

A zinc finger lies at 3–34; it reads CPFCSAVDTKVIDSRLVGEGTQVRRRRQCVIC. One can recognise an ATP-cone domain in the interval 49–139; the sequence is PRVIKSNDVR…VYRSFEDIRE (91 aa).

The protein belongs to the NrdR family. The cofactor is Zn(2+).

Negatively regulates transcription of bacterial ribonucleotide reductase nrd genes and operons by binding to NrdR-boxes. This chain is Transcriptional repressor NrdR, found in Sodalis glossinidius (strain morsitans).